A 1135-amino-acid chain; its full sequence is DNA-directed RNA polymerase subunit beta' (1135 aa).

4 residues coordinate Zn(2+): Cys60, Cys62, Cys75, and Cys78. Residues Asp450, Asp452, and Asp454 each contribute to the Mg(2+) site. Cys795, Cys869, Cys876, and Cys879 together coordinate Zn(2+).

This sequence belongs to the RNA polymerase beta' chain family. The RNAP catalytic core consists of 2 alpha, 1 beta, 1 beta' and 1 omega subunit. When a sigma factor is associated with the core the holoenzyme is formed, which can initiate transcription. The cofactor is Mg(2+). It depends on Zn(2+) as a cofactor.

The enzyme catalyses RNA(n) + a ribonucleoside 5'-triphosphate = RNA(n+1) + diphosphate. DNA-dependent RNA polymerase catalyzes the transcription of DNA into RNA using the four ribonucleoside triphosphates as substrates. In Clostridium tetani (strain Massachusetts / E88), this protein is DNA-directed RNA polymerase subunit beta'.